Reading from the N-terminus, the 89-residue chain is Small ribosomal subunit protein bS20 (89 aa).

Positions 1–25 are disordered; it reads MANTPQSKKRARQLERRTAVNKARR.

It belongs to the bacterial ribosomal protein bS20 family.

In terms of biological role, binds directly to 16S ribosomal RNA. The chain is Small ribosomal subunit protein bS20 from Paracoccus denitrificans (strain Pd 1222).